The primary structure comprises 278 residues: Tryptophan synthase alpha chain (278 aa).

Residues glutamate 49 and aspartate 60 each act as proton acceptor in the active site.

This sequence belongs to the TrpA family. As to quaternary structure, tetramer of two alpha and two beta chains.

It carries out the reaction (1S,2R)-1-C-(indol-3-yl)glycerol 3-phosphate + L-serine = D-glyceraldehyde 3-phosphate + L-tryptophan + H2O. Its pathway is amino-acid biosynthesis; L-tryptophan biosynthesis; L-tryptophan from chorismate: step 5/5. The alpha subunit is responsible for the aldol cleavage of indoleglycerol phosphate to indole and glyceraldehyde 3-phosphate. This Psychrobacter arcticus (strain DSM 17307 / VKM B-2377 / 273-4) protein is Tryptophan synthase alpha chain.